Reading from the N-terminus, the 197-residue chain is Cell division protein SepF (197 aa).

Positions 15-91 are disordered; it reads DEEEVESPEE…PPSKSNGKNV (77 aa). Basic and acidic residues predominate over residues 22 to 31; it reads PEERQRRVVQ. A compositionally biased stretch (low complexity) spans 37–47; it reads TNNVQQNQPQQ. Polar residues-rich tracts occupy residues 48-58 and 78-91; these read SERSYSNQSKL and RMNQPPSKSNGKNV.

This sequence belongs to the SepF family. As to quaternary structure, homodimer. Interacts with FtsZ.

Its subcellular location is the cytoplasm. In terms of biological role, cell division protein that is part of the divisome complex and is recruited early to the Z-ring. Probably stimulates Z-ring formation, perhaps through the cross-linking of FtsZ protofilaments. Its function overlaps with FtsA. The polypeptide is Cell division protein SepF (Staphylococcus haemolyticus (strain JCSC1435)).